We begin with the raw amino-acid sequence, 72 residues long: Penaeidin-2a (72 aa).

A signal peptide spans 1 to 21; sequence MRLVVCLVFLASFALVCQGEA. Cystine bridges form between Cys-45/Cys-59, Cys-48/Cys-66, and Cys-60/Cys-67. At Lys-71 the chain carries Lysine amide.

As to expression, higher expression in hemocytes and to a lesser extent in heart, testis, gills, intestine, lymphoid organ and hepatopancreas. Traces in eyes and subcuticular epithelium. Not present in the brain.

Its subcellular location is the cytoplasmic granule. Antibacterial activity against M.luteus and E.coli bacteria. Antifungal activity against N.crassa and F.oxysporum. Presents chitin-binding activity. This chain is Penaeidin-2a, found in Penaeus vannamei (Whiteleg shrimp).